The primary structure comprises 310 residues: N-acetylmuramic acid 6-phosphate etherase (310 aa).

Positions 64–227 (ITSRLKSNGR…STSVMIKLGK (164 aa)) constitute an SIS domain. Glu-92 acts as the Proton donor in catalysis. Glu-123 is a catalytic residue.

The protein belongs to the GCKR-like family. MurNAc-6-P etherase subfamily. Homodimer.

It carries out the reaction N-acetyl-D-muramate 6-phosphate + H2O = N-acetyl-D-glucosamine 6-phosphate + (R)-lactate. It participates in amino-sugar metabolism; N-acetylmuramate degradation. Specifically catalyzes the cleavage of the D-lactyl ether substituent of MurNAc 6-phosphate, producing GlcNAc 6-phosphate and D-lactate. This is N-acetylmuramic acid 6-phosphate etherase from Prochlorococcus marinus (strain NATL2A).